Reading from the N-terminus, the 280-residue chain is UDP-2,3-diacylglucosamine pyrophosphatase LpxI (280 aa).

Substrate contacts are provided by residues Ala12, 74–75 (NV), Gln169, 187–188 (TD), Lys214, and 226–233 (LPTIGVAT).

Belongs to the LpxI family. Homodimer. The cofactor is Mg(2+).

Its subcellular location is the cell inner membrane. The catalysed reaction is UDP-2-N,3-O-bis[(3R)-3-hydroxytetradecanoyl]-alpha-D-glucosamine + H2O = 2-N,3-O-bis[(3R)-3-hydroxytetradecanoyl]-alpha-D-glucosaminyl 1-phosphate + UMP + 2 H(+). Its pathway is glycolipid biosynthesis; lipid IV(A) biosynthesis; lipid IV(A) from (3R)-3-hydroxytetradecanoyl-[acyl-carrier-protein] and UDP-N-acetyl-alpha-D-glucosamine: step 4/6. With respect to regulation, inhibited by high concentrations of Cu(2+) and Zn(2+). Completely inhibited by EDTA in vitro. Its function is as follows. Hydrolyzes the pyrophosphate bond of UDP-2,3-diacylglucosamine to form 2,3-diacylglucosamine 1-phosphate (lipid X) and UMP by catalyzing the attack of water at the beta-P atom. Involved in the biosynthesis of lipid A, a phosphorylated glycolipid that anchors the lipopolysaccharide to the outer membrane of the cell. Can functionally complement lpxH deficiency in E.coli. Cannot use CDP-diacylglycerol as substrate. The polypeptide is UDP-2,3-diacylglucosamine pyrophosphatase LpxI (Caulobacter vibrioides (strain ATCC 19089 / CIP 103742 / CB 15) (Caulobacter crescentus)).